Reading from the N-terminus, the 173-residue chain is NADH-ubiquinone oxidoreductase chain 6 (173 aa).

Helical transmembrane passes span 1–21 (MTYL…AVAS), 24–44 (APYF…GVLV), 53–73 (LVLF…SAAL), 87–107 (VLGY…LFWG), and 141–161 (GGML…VLEL).

Belongs to the complex I subunit 6 family.

It is found in the mitochondrion membrane. The enzyme catalyses a ubiquinone + NADH + 5 H(+)(in) = a ubiquinol + NAD(+) + 4 H(+)(out). In terms of biological role, core subunit of the mitochondrial membrane respiratory chain NADH dehydrogenase (Complex I) that is believed to belong to the minimal assembly required for catalysis. Complex I functions in the transfer of electrons from NADH to the respiratory chain. The immediate electron acceptor for the enzyme is believed to be ubiquinone. In Oncorhynchus mykiss (Rainbow trout), this protein is NADH-ubiquinone oxidoreductase chain 6 (MT-ND6).